The following is a 329-amino-acid chain: 4-hydroxythreonine-4-phosphate dehydrogenase (329 aa).

2 residues coordinate substrate: His136 and Thr137. A divalent metal cation-binding residues include His166, His211, and His266. The substrate site is built by Lys274, Asn283, and Arg292.

Belongs to the PdxA family. In terms of assembly, homodimer. The cofactor is Zn(2+). Mg(2+) serves as cofactor. It depends on Co(2+) as a cofactor.

The protein localises to the cytoplasm. It carries out the reaction 4-(phosphooxy)-L-threonine + NAD(+) = 3-amino-2-oxopropyl phosphate + CO2 + NADH. Its pathway is cofactor biosynthesis; pyridoxine 5'-phosphate biosynthesis; pyridoxine 5'-phosphate from D-erythrose 4-phosphate: step 4/5. Its function is as follows. Catalyzes the NAD(P)-dependent oxidation of 4-(phosphooxy)-L-threonine (HTP) into 2-amino-3-oxo-4-(phosphooxy)butyric acid which spontaneously decarboxylates to form 3-amino-2-oxopropyl phosphate (AHAP). The protein is 4-hydroxythreonine-4-phosphate dehydrogenase of Shigella flexneri serotype 5b (strain 8401).